A 640-amino-acid chain; its full sequence is Probable serine/threonine-protein kinase samkA (640 aa).

In terms of domain architecture, SAM spans 21-84; that stretch reads WNNEKIIKWL…SEFEILKNNY (64 aa). The stretch at 73–100 forms a coiled coil; sequence FKSEFEILKNNYDNNNNNNNNNNNNNNN. Positions 84 to 165 are disordered; sequence YDNNNNNNNN…INFNSNSNIT (82 aa). One can recognise a Protein kinase domain in the interval 191–437; that stretch reads YEYVESISLG…SKDLQKLSWF (247 aa). Residues 197 to 205 and Lys221 each bind ATP; that span reads ISLGVFSVV. Asp312 serves as the catalytic Proton acceptor. Positions 448 to 482 are disordered; sequence QELTKSTTNTTTTTTTTTTPPPPPSPSSSSPSMNE. The segment covering 453–465 has biased composition (low complexity); sequence STTNTTTTTTTTT.

It belongs to the protein kinase superfamily. Ser/Thr protein kinase family.

It catalyses the reaction L-seryl-[protein] + ATP = O-phospho-L-seryl-[protein] + ADP + H(+). The catalysed reaction is L-threonyl-[protein] + ATP = O-phospho-L-threonyl-[protein] + ADP + H(+). The sequence is that of Probable serine/threonine-protein kinase samkA (samkA) from Dictyostelium discoideum (Social amoeba).